The sequence spans 226 residues: Deoxyribose-phosphate aldolase (226 aa).

Catalysis depends on Asp84, which acts as the Proton donor/acceptor. The active-site Schiff-base intermediate with acetaldehyde is the Lys146. The active-site Proton donor/acceptor is Lys188.

The protein belongs to the DeoC/FbaB aldolase family. DeoC type 1 subfamily.

It is found in the cytoplasm. The enzyme catalyses 2-deoxy-D-ribose 5-phosphate = D-glyceraldehyde 3-phosphate + acetaldehyde. The protein operates within carbohydrate degradation; 2-deoxy-D-ribose 1-phosphate degradation; D-glyceraldehyde 3-phosphate and acetaldehyde from 2-deoxy-alpha-D-ribose 1-phosphate: step 2/2. Catalyzes a reversible aldol reaction between acetaldehyde and D-glyceraldehyde 3-phosphate to generate 2-deoxy-D-ribose 5-phosphate. The sequence is that of Deoxyribose-phosphate aldolase from Pyrobaculum arsenaticum (strain DSM 13514 / JCM 11321 / PZ6).